The primary structure comprises 597 residues: uncharacterized protein (597 aa).

Helical transmembrane passes span 37 to 57 (VLIILLGVVTQFLTNGGLWPV), 67 to 87 (IFWLYVGFALVFTVLAFLQFA), 109 to 129 (GGERIVIFFPLYLVPLTYAAI), 134 to 154 (SVSLLSGLLAAVAYMAAFIAW), and 162 to 182 (ALMTLLDYVALALRGTTLAIV). One can recognise a Histidine kinase domain in the interval 393-597 (HQLARDLHDG…QITIFVPIES (205 aa)).

Its subcellular location is the cell membrane. This is an uncharacterized protein from Chloroflexus aurantiacus (strain ATCC 29366 / DSM 635 / J-10-fl).